Here is a 925-residue protein sequence, read N- to C-terminus: Antiviral innate immune response receptor RIG-I (925 aa).

CARD domains lie at 1–87 and 92–172; these read MTTE…GLYE and WDFK…KTLK. S8 carries the post-translational modification (Microbial infection) Phosphoserine. S8 is modified (phosphoserine). Residues K48, K96, K154, and K164 each participate in a glycyl lysine isopeptide (Lys-Gly) (interchain with G-Cter in ubiquitin) cross-link. A Phosphothreonine modification is found at T170. Residues K172, K181, K193, and K203 each participate in a glycyl lysine isopeptide (Lys-Gly) (interchain with G-Cter in ubiquitin) cross-link. The interaction with ZC3HAV1 stretch occupies residues 218-925; the sequence is ECQNLSENSC…IPFDPAEMSK (708 aa). A Helicase ATP-binding domain is found at 251–430; it reads ALPAMKGKNT…DEALDYICKL (180 aa). 264–271 lines the ATP pocket; that stretch reads APTGCGKT. The DECH box motif lies at 372–375; it reads DECH. A (Microbial infection) Deamidated asparagine; by herpes simplex virus 1/HHV-1 UL37 mark is found at N495 and N549. The Helicase C-terminal domain maps to 610 to 776; sequence KLEDLCFILQ…RLQTWDEAVF (167 aa). Residues 735-925 form a mediates interaction with RNF135 region; sequence GSKCFLLTSN…IPFDPAEMSK (191 aa). T770 bears the Phosphothreonine; by CK2 mark. Residues 794–925 form the RLR CTR domain; the sequence is QEKPKPVPDK…IPFDPAEMSK (132 aa). C810 lines the Zn(2+) pocket. K812 participates in a covalent cross-link: Glycyl lysine isopeptide (Lys-Gly) (interchain with G-Cter in ubiquitin). C813 serves as a coordination point for Zn(2+). 2 positions are modified to phosphoserine; by CK2: S854 and S855. Residue K858 is modified to N6-acetyllysine. Positions 864 and 869 each coordinate Zn(2+). K909 is modified (N6-acetyllysine).

The protein belongs to the helicase family. RLR subfamily. Monomer; maintained as a monomer in an autoinhibited state. Upon binding of viral RNAs and conformational shift, homooligomerizes and forms filaments on these molecules. Interacts (via tandem CARD domain) with MAVS/IPS1 promoting its filamentation. Interacts with DHX58/LGP2, IKBKE, TBK1 and STING1. Interacts (via CARD domain) with TRIM25 (via SPRY domain). Interacts (double-stranded RNA-bound oligomeric form) with RNF135 (homodimer); involved in RNA length-dependent activation of the RIG-I signaling pathway. Interacts with CYLD. Interacts with NLRC5; blocks the interaction of MAVS/IPS1 to RIGI. Interacts with SRC. Interacts with DDX60. Interacts with isoform 2 of ZC3HAV1 (via zinc-fingers) in an RNA-dependent manner. Interacts (via tandem CARD domain) with SEC14L1; the interaction is direct and impairs the interaction of RIGI with MAVS/IPS1. Interacts with VCP/p97; interaction is direct and allows the recruitment of RNF125 and subsequent ubiquitination and degradation. Interacts with NOP53; may regulate RIGI through USP15-mediated 'Lys-63'-linked deubiquitination. Interacts with SIGLEC10, CBL and PTPN11; within a negative feedback loop leading to RIGI degradation. Interacts with LRRC25. Interacts with ZCCHC3; leading to activation of RIGI. Interacts with RNF123. Interacts with UBE2D3 and UBE2N; E2 ubiquitin ligases involved in RNF135-mediated ubiquitination of RIGI and activation of the RIG-I signaling pathway. Interacts with IFIT3. Interacts with DDX3X. Interacts with RTN3. Interacts with ARL16; this interaction is GTP-dependent and induced upon viral infection; this interaction suppresses the RNA sensing activity of RIGI. Interacts with DHX16; this interaction enhances RIGI-mediated antiviral response. Interacts with IRGM; promoting RIGI degradation. Interacts with IFI6; this interaction inhibits RIGI activation. Interacts with ECSIT; this interaction bridges RIGI to the MAVS complex at the mitochondrion. Interacts with YWHAE; this interaction drives RIGI at the mitochondrion. In terms of assembly, (Microbial infection) Interacts with protein Z of Guanarito virus, Machupo virus, Junin arenavirus and Sabia virus. This interaction disrupts its interaction with MAVS/IPS1, impeding downstream IRF3 and NF-kappa-B activation and resulting in decreased IFN-beta induction. As to quaternary structure, (Microbial infection) Interacts (via CARD domain) with Human respiratory syncytial virus A non-structural protein 2 (NS2) and this interaction disrupts its interaction with MAVS/IPS1, impeding downstream IRF3 activation. (Microbial infection) Interacts with Rotavirus A non-structural protein 1 (NSP1) and this interaction induces down-regulation of RIGI. In terms of assembly, (Microbial infection) Interacts with paramyxoviruses (Sendai virus, Nipah virus, Measles virus and Parainfluenza virus 5) protein V; this interaction inhibits TRIM25-mediated ubiquitination of RIG-I and prevents downstream RIG-I signaling thereby inhibiting the IFN responses. As to quaternary structure, (Microbial infection) Interacts with herpes simplex virus 1 protein US11; this interaction prevents the interaction of MAVS/IPS1 to RIGI. (Microbial infection) Interacts with herpes simplex virus 1 protein UL37; this interaction deaminates RIGI and inhibits its activation. In terms of assembly, (Microbial infection) Interacts with Severe fever with thrombocytopenia virus (SFTSV) NSs; this interaction this interaction sequesters RIGI in NSs-induced cytoplasmic inclusion bodies thereby inhibiting the IFN responses. In terms of processing, phosphorylated in resting cells and dephosphorylated in RNA virus-infected cells. Phosphorylation at Thr-770, Ser-854 and Ser-855 results in inhibition of its activity while dephosphorylation at these sites results in its activation. Post-translationally, ubiquitinated. 'Lys-63' ubiquitination by RNF135, which occurs after RNA-binding and homodimerization, releases the autoinhibition of the CARD domains by the RLR CTR domain, an essential step in the activation of the RIG-I signaling pathway. Lys-172 is the critical site of ubiquitination for MAVS/IPS1 binding and to induce anti-viral signal transduction. Lys-154, Lys-164 and Lys-172 are shared sites for RNF135-mediated and TRIM4-mediated ubiquitination. Also undergoes 'Lys-48' ubiquitination at Lys-181 by RNF125 that leads to proteasomal degradation. 'Lys-48' ubiquitination follows viral infection and is enhanced by 'Lys-63'-linked ubiquitination of the CARD domains that promotes interaction with VCP/p97 and subsequent recruitment of RNF125. Within a negative feedback loop involving SIGLEC10 and PTPN11, 'Lys-48' ubiquitination at Lys-812 by CBL also elicits the proteasomal degradation of RIGI. Deubiquitinated by CYLD, a protease that selectively cleaves 'Lys-63'-linked ubiquitin chains. Also probably deubiquitinated by USP17L2/USP17 that cleaves 'Lys-48'- and 'Lys-63'-linked ubiquitin chains and positively regulates the receptor. Ubiquitinated by TRIM40 via 'Lys-48'-linked ubiquitination; leading to proteasomal degradation. Deubiquitinated by USP27X that cleaves 'Lys-63'-linked ubiquitin chains and inhibits the innate immune receptor activity. Deubiquitinated by USP3 that also cleaves 'Lys-63'-linked ubiquitin chains and inhibits the innate immune receptor activity. Undergoes 'Lys-48'-linked ubiquitination catalyzed by MARCHF5 at Lys-193 and Lys-203, leading to proteasomal degradation. Phosphorylated at Ser-8 and Thr-170; these phosphorylations suppresse the TRIM25-mediated 'Lys-63'-linked ubiquitination of RIG-I and thereby prevents RIG-I downstream signaling. Dephosphorylated by phosphatases PPP1CA/PPP1CC; this step is essential to activate RIGI and initiate downstream signaling. In terms of processing, ISGylated. Conjugated to ubiquitin-like protein ISG15 upon IFN-beta stimulation. ISGylation negatively regulates its function in antiviral signaling response. Post-translationally, sumoylated, probably by MUL1; inhibiting its polyubiquitination. Acetylated in response to RNA virus infection. Deacetylated by HDAC6 in the presence of viral mRNAs which is required for detection of viral RNA by RIGI. In terms of processing, (Microbial infection) Deamidated on Asn-495 and Asn-549 by herpes simplex virus 1 protein UL37. These modifications eliminate RIGI detection of viral RNA and restriction of viral replication. Post-translationally, degraded via selective autophagy following interaction with IRGM. IRGM promotes RIGI recruitment to autophagosome membranes, promoting its SQSTM1/p62-dependent autophagic degradation. (Microbial infection) Cleaved by the protease 3C of coxsackievirus B3, poliovirus and enterovirus 71 allowing the virus to disrupt the host type I interferon production. In terms of processing, (Microbial infection) Phosphorylated at Ser-8 by herpes simplex virus 1 protein US3 leading to inhibition of critical RIGI activation steps. Present in vascular smooth cells (at protein level).

It localises to the cytoplasm. Its subcellular location is the cell projection. The protein resides in the ruffle membrane. It is found in the cytoskeleton. The protein localises to the cell junction. It localises to the tight junction. The catalysed reaction is ATP + H2O = ADP + phosphate + H(+). In terms of biological role, innate immune receptor that senses cytoplasmic viral nucleic acids and activates a downstream signaling cascade leading to the production of type I interferons and pro-inflammatory cytokines. Forms a ribonucleoprotein complex with viral RNAs on which it homooligomerizes to form filaments. The homooligomerization allows the recruitment of RNF135 an E3 ubiquitin-protein ligase that activates and amplifies the RIG-I-mediated antiviral signaling in an RNA length-dependent manner through ubiquitination-dependent and -independent mechanisms. Upon activation, associates with mitochondria antiviral signaling protein (MAVS/IPS1) that activates the IKK-related kinases TBK1 and IKBKE which in turn phosphorylate the interferon regulatory factors IRF3 and IRF7, activating transcription of antiviral immunological genes including the IFN-alpha and IFN-beta interferons. Ligands include 5'-triphosphorylated ssRNAs and dsRNAs but also short dsRNAs (&lt;1 kb in length). In addition to the 5'-triphosphate moiety, blunt-end base pairing at the 5'-end of the RNA is very essential. Overhangs at the non-triphosphorylated end of the dsRNA RNA have no major impact on its activity. A 3'overhang at the 5'triphosphate end decreases and any 5'overhang at the 5' triphosphate end abolishes its activity. Detects both positive and negative strand RNA viruses including members of the families Paramyxoviridae: Human respiratory syncytial virus and measles virus (MeV), Rhabdoviridae: vesicular stomatitis virus (VSV), Orthomyxoviridae: influenza A and B virus, Flaviviridae: Japanese encephalitis virus (JEV), hepatitis C virus (HCV), dengue virus (DENV) and west Nile virus (WNV). It also detects rotaviruses and reoviruses. Detects and binds to SARS-CoV-2 RNAs which is inhibited by m6A RNA modifications. Also involved in antiviral signaling in response to viruses containing a dsDNA genome such as Epstein-Barr virus (EBV). Detects dsRNA produced from non-self dsDNA by RNA polymerase III, such as Epstein-Barr virus-encoded RNAs (EBERs). May play important roles in granulocyte production and differentiation, bacterial phagocytosis and in the regulation of cell migration. In Homo sapiens (Human), this protein is Antiviral innate immune response receptor RIG-I.